A 487-amino-acid polypeptide reads, in one-letter code: Homeobox protein homothorax (487 aa).

3 disordered regions span residues 25 to 49, 210 to 292, and 333 to 369; these read YDPHAGHRPPGLQGLPSHHSPHMTH, DTTK…SSLN, and NFGTSASGDASNASIGSGEGTGEEDDDASGKKNQKKR. Residues 127 to 211 enclose the MEIS N-terminal domain; the sequence is GGDVCSSESF…IDLVIDERDT (85 aa). 2 stretches are compositionally biased toward polar residues: residues 227–237 and 333–345; these read NADSTSHTDGA and NFGTSASGDASNA. Residues 365–427 constitute a DNA-binding region (homeobox; TALE-type); that stretch reads NQKKRGIFPK…NARRRIVQPM (63 aa).

It belongs to the TALE/MEIS homeobox family. As to quaternary structure, interacts with exd; required for nuclear translocation of exd. In terms of tissue distribution, in the wing disk, the expression is present in the regions corresponding to notum, wing hinge and ventral pleura. In the leg disk, the expression is in the periphery region, corresponding to the proximal segments of the legs. In the antennal disk, the expression is in all but the arista region. In the eye disk, the expression is strong in the anterior region surrounding the eye field, including the regions corresponding to ptilinum, ocellus and head capsules, and weak in the posterior and lateral margins of the eye disk. Expressed specifically in maturating inner photoreceptors of the DRA and maintained through adulthood.

The protein localises to the nucleus. Its function is as follows. All isoforms are required for patterning of the embryonic cuticle. Acts with exd to delimit the eye field and prevent inappropriate eye development. Isoforms that carry the homeodomain are required for proper localization of chordotonal organs within the peripheral nervous system and antennal identity; required to activate antennal-specific genes, such as sal and to repress the leg-like expression of dac. Necessary for the nuclear localization of the essential HOX cofactor, extradenticle (exd). Both necessary and sufficient for inner photoreceptors to adopt the polarization-sensitive 'dorsal rim area' (DRA) of the eye fate instead of the color-sensitive default state. This occurs by increasing rhabdomere size and uncoupling R7-R8 communication to allow both cells to express the same opsin rather than different ones as required for color vision. The chain is Homeobox protein homothorax from Drosophila melanogaster (Fruit fly).